Consider the following 1370-residue polypeptide: DNA-directed RNA polymerase subunit beta (1370 aa).

The protein belongs to the RNA polymerase beta chain family. In terms of assembly, the RNAP catalytic core consists of 2 alpha, 1 beta, 1 beta' and 1 omega subunit. When a sigma factor is associated with the core the holoenzyme is formed, which can initiate transcription.

The enzyme catalyses RNA(n) + a ribonucleoside 5'-triphosphate = RNA(n+1) + diphosphate. In terms of biological role, DNA-dependent RNA polymerase catalyzes the transcription of DNA into RNA using the four ribonucleoside triphosphates as substrates. The sequence is that of DNA-directed RNA polymerase subunit beta from Albidiferax ferrireducens (strain ATCC BAA-621 / DSM 15236 / T118) (Rhodoferax ferrireducens).